A 614-amino-acid polypeptide reads, in one-letter code: UvrABC system protein C (614 aa).

The GIY-YIG domain occupies 20 to 98 (TAPGVYRMYA…IKSLSPRYNV (79 aa)). Positions 207 to 242 (DELTRELGEQMQAASEALEFEQAARLRDLISSLRSM) constitute a UVR domain.

Belongs to the UvrC family. In terms of assembly, interacts with UvrB in an incision complex.

Its subcellular location is the cytoplasm. The UvrABC repair system catalyzes the recognition and processing of DNA lesions. UvrC both incises the 5' and 3' sides of the lesion. The N-terminal half is responsible for the 3' incision and the C-terminal half is responsible for the 5' incision. The protein is UvrABC system protein C of Stenotrophomonas maltophilia (strain R551-3).